The primary structure comprises 161 residues: 3-isopropylmalate dehydratase small subunit (161 aa).

This sequence belongs to the LeuD family. LeuD type 2 subfamily. As to quaternary structure, heterodimer of LeuC and LeuD.

It catalyses the reaction (2R,3S)-3-isopropylmalate = (2S)-2-isopropylmalate. The protein operates within amino-acid biosynthesis; L-leucine biosynthesis; L-leucine from 3-methyl-2-oxobutanoate: step 2/4. Its function is as follows. Catalyzes the isomerization between 2-isopropylmalate and 3-isopropylmalate, via the formation of 2-isopropylmaleate. The protein is 3-isopropylmalate dehydratase small subunit of Sulfolobus acidocaldarius (strain ATCC 33909 / DSM 639 / JCM 8929 / NBRC 15157 / NCIMB 11770).